The following is a 128-amino-acid chain: Large ribosomal subunit protein bL17 (128 aa).

This sequence belongs to the bacterial ribosomal protein bL17 family. Part of the 50S ribosomal subunit. Contacts protein L32.

This is Large ribosomal subunit protein bL17 from Haemophilus influenzae (strain 86-028NP).